The primary structure comprises 59 residues: Movement protein TGBp3 (59 aa).

The Lumenal portion of the chain corresponds to Met-1–Leu-3. Residues Ala-4–Thr-21 form a helical membrane-spanning segment. Over Thr-22–Gly-59 the chain is Cytoplasmic.

The protein belongs to the Tymovirales TGBp3 protein family.

Its subcellular location is the host endoplasmic reticulum membrane. Functionally, plays a role in viral cell-to-cell propagation, by facilitating genome transport to neighboring plant cells through plasmosdesmata. May induce the formation of granular vesicles derived from the Endoplasmic reticulum, which align on actin filaments. The protein is Movement protein TGBp3 of Chenopodium album (Fat hen).